The sequence spans 65 residues: Small ribosomal subunit protein eS27 (65 aa).

Cys20, Cys23, Cys39, and Cys42 together coordinate Zn(2+). The C4-type zinc-finger motif lies at 20-42 (CIDCGNEQIVFSHPATRVRCNVC).

This sequence belongs to the eukaryotic ribosomal protein eS27 family. In terms of assembly, part of the 30S ribosomal subunit. The cofactor is Zn(2+).

The polypeptide is Small ribosomal subunit protein eS27 (Pyrococcus abyssi (strain GE5 / Orsay)).